The following is a 237-amino-acid chain: Sugar fermentation stimulation protein homolog (237 aa).

The protein belongs to the SfsA family.

This Pseudomonas syringae pv. tomato (strain ATCC BAA-871 / DC3000) protein is Sugar fermentation stimulation protein homolog.